We begin with the raw amino-acid sequence, 47 residues long: Lysis protein for colicin E5 (47 aa).

The signal sequence occupies residues 1–19; that stretch reads MKKITWIILLLLAAIILAA. C20 carries N-palmitoyl cysteine lipidation. C20 carries S-diacylglycerol cysteine lipidation.

Its subcellular location is the cell outer membrane. Lysis proteins are required for both colicin release and partial cell lysis. In Escherichia coli, this protein is Lysis protein for colicin E5 (lys).